Reading from the N-terminus, the 97-residue chain is Mitochondrial import inner membrane translocase subunit Tim8 A (97 aa).

The Twin CX3C motif motif lies at Cys43–Cys66. 2 disulfide bridges follow: Cys43–Cys66 and Cys47–Cys62. A phosphoserine mark is found at Ser57, Ser87, Ser94, and Ser96.

Belongs to the small Tim family. As to quaternary structure, heterohexamer; composed of 3 copies of TIMM8A and 3 copies of TIMM13, named soluble 70 kDa complex. Associates with the TIM22 complex, whose core is composed of TIMM22.

Its subcellular location is the mitochondrion inner membrane. Its function is as follows. Mitochondrial intermembrane chaperone that participates in the import and insertion of some multi-pass transmembrane proteins into the mitochondrial inner membrane. Also required for the transfer of beta-barrel precursors from the TOM complex to the sorting and assembly machinery (SAM complex) of the outer membrane. Acts as a chaperone-like protein that protects the hydrophobic precursors from aggregation and guide them through the mitochondrial intermembrane space. The TIMM8-TIMM13 complex mediates the import of proteins such as TIMM23, SLC25A12/ARALAR1 and SLC25A13/ARALAR2, while the predominant TIMM9-TIMM10 70 kDa complex mediates the import of much more proteins. This chain is Mitochondrial import inner membrane translocase subunit Tim8 A (Timm8a), found in Rattus norvegicus (Rat).